A 669-amino-acid chain; its full sequence is DNA ligase (669 aa).

NAD(+)-binding positions include 34-38 (DAEYD), 83-84 (SL), and Glu-114. Lys-116 functions as the N6-AMP-lysine intermediate in the catalytic mechanism. Residues Arg-137, Glu-171, Lys-287, and Lys-311 each contribute to the NAD(+) site. Cys-405, Cys-408, Cys-423, and Cys-428 together coordinate Zn(2+). One can recognise a BRCT domain in the interval 591–669 (NVESYFAGKT…EERFLQELNK (79 aa)).

Belongs to the NAD-dependent DNA ligase family. LigA subfamily. Mg(2+) serves as cofactor. Requires Mn(2+) as cofactor.

It carries out the reaction NAD(+) + (deoxyribonucleotide)n-3'-hydroxyl + 5'-phospho-(deoxyribonucleotide)m = (deoxyribonucleotide)n+m + AMP + beta-nicotinamide D-nucleotide.. In terms of biological role, DNA ligase that catalyzes the formation of phosphodiester linkages between 5'-phosphoryl and 3'-hydroxyl groups in double-stranded DNA using NAD as a coenzyme and as the energy source for the reaction. It is essential for DNA replication and repair of damaged DNA. The protein is DNA ligase of Bacillus cereus (strain ZK / E33L).